The primary structure comprises 44 residues: Photosystem I reaction center subunit IX (44 aa).

A helical transmembrane segment spans residues 9–29 (YMRSAPVVAAAWITMTAGIII).

It belongs to the PsaJ family.

It is found in the cellular thylakoid membrane. In terms of biological role, may help in the organization of the PsaE and PsaF subunits. The polypeptide is Photosystem I reaction center subunit IX (Prochlorococcus marinus (strain MIT 9312)).